The sequence spans 282 residues: Acetyl-coenzyme A carboxylase carboxyl transferase subunit beta (282 aa).

The CoA carboxyltransferase N-terminal domain occupies 29-282 (LWRTCPKCQR…LMKYGGKQND (254 aa)). Cys-33, Cys-36, Cys-51, and Cys-54 together coordinate Zn(2+). The C4-type zinc finger occupies 33–54 (CPKCQRTLFAAQMDEYATCPGC).

Belongs to the AccD/PCCB family. As to quaternary structure, acetyl-CoA carboxylase is a heterohexamer composed of biotin carboxyl carrier protein (AccB), biotin carboxylase (AccC) and two subunits each of ACCase subunit alpha (AccA) and ACCase subunit beta (AccD). The cofactor is Zn(2+).

Its subcellular location is the cytoplasm. The enzyme catalyses N(6)-carboxybiotinyl-L-lysyl-[protein] + acetyl-CoA = N(6)-biotinyl-L-lysyl-[protein] + malonyl-CoA. The protein operates within lipid metabolism; malonyl-CoA biosynthesis; malonyl-CoA from acetyl-CoA: step 1/1. Functionally, component of the acetyl coenzyme A carboxylase (ACC) complex. Biotin carboxylase (BC) catalyzes the carboxylation of biotin on its carrier protein (BCCP) and then the CO(2) group is transferred by the transcarboxylase to acetyl-CoA to form malonyl-CoA. The protein is Acetyl-coenzyme A carboxylase carboxyl transferase subunit beta of Limosilactobacillus fermentum (strain NBRC 3956 / LMG 18251) (Lactobacillus fermentum).